The following is a 251-amino-acid chain: Imidazole glycerol phosphate synthase subunit HisF (251 aa).

Residues Asp-13 and Asp-132 contribute to the active site.

This sequence belongs to the HisA/HisF family. In terms of assembly, heterodimer of HisH and HisF.

The protein localises to the cytoplasm. The enzyme catalyses 5-[(5-phospho-1-deoxy-D-ribulos-1-ylimino)methylamino]-1-(5-phospho-beta-D-ribosyl)imidazole-4-carboxamide + L-glutamine = D-erythro-1-(imidazol-4-yl)glycerol 3-phosphate + 5-amino-1-(5-phospho-beta-D-ribosyl)imidazole-4-carboxamide + L-glutamate + H(+). Its pathway is amino-acid biosynthesis; L-histidine biosynthesis; L-histidine from 5-phospho-alpha-D-ribose 1-diphosphate: step 5/9. Its function is as follows. IGPS catalyzes the conversion of PRFAR and glutamine to IGP, AICAR and glutamate. The HisF subunit catalyzes the cyclization activity that produces IGP and AICAR from PRFAR using the ammonia provided by the HisH subunit. This is Imidazole glycerol phosphate synthase subunit HisF from Campylobacter concisus (strain 13826).